An 844-amino-acid polypeptide reads, in one-letter code: Prickle-like protein 2 (844 aa).

Residues 18 to 126 form the PET domain; it reads FDFQRNSTSD…NVRPFPVTMT (109 aa). S92 is subject to Phosphoserine. LIM zinc-binding domains are found at residues 128–193, 193–253, and 253–317; these read AICE…CLKP, PRCA…LYAE, and EYCD…EDPN. 2 disordered regions span residues 314-350 and 481-519; these read EDPNGSDSSDSAFQNARAKESRRSAKIGKNKGKTEEP and ESYSDMSSQSFSETRGSIQVPKYEEEEEEEGGLSTQQCR. Residues 318 to 327 are compositionally biased toward polar residues; that stretch reads GSDSSDSAFQ. 3 positions are modified to phosphoserine: S319, S321, and S322. A compositionally biased stretch (low complexity) spans 481–493; it reads ESYSDMSSQSFSE. Phosphothreonine occurs at positions 534, 536, and 539. A phosphoserine mark is found at S543, S546, S607, and S642. A disordered region spans residues 639-709; the sequence is MHQSFDFDGG…HLASEREAIS (71 aa). Over residues 682-692 the composition is skewed to basic residues; it reads FRPHRSRRSRR. A compositionally biased stretch (basic and acidic residues) spans 693–709; that stretch reads SRSDNALHLASEREAIS. Residue S731 is modified to Phosphoserine. The disordered stretch occupies residues 822-844; that stretch reads STLGGRGQLHSRKRQKSKNCIIS. Cysteine methyl ester is present on C841. The S-farnesyl cysteine moiety is linked to residue C841. A propeptide spans 842–844 (removed in mature form); it reads IIS.

It belongs to the prickle / espinas / testin family. Expressed in brain, eye and testis. Additionally in fetal brain, adult cartilage, pancreatic islet, gastric cancer and uterus tumors.

It localises to the nucleus membrane. The sequence is that of Prickle-like protein 2 (PRICKLE2) from Homo sapiens (Human).